A 560-amino-acid polypeptide reads, in one-letter code: Membrane protein insertase YidC (560 aa).

6 consecutive transmembrane segments (helical) span residues 5 to 25 (IINL…WQYF), 334 to 354 (AIDF…MNFF), 357 to 377 (YVGN…LLMF), 431 to 451 (LPIL…YVTI), 476 to 496 (LFGL…WPIL), and 522 to 542 (FMPL…LIYW).

Belongs to the OXA1/ALB3/YidC family. Type 1 subfamily. Interacts with the Sec translocase complex via SecD. Specifically interacts with transmembrane segments of nascent integral membrane proteins during membrane integration.

The protein localises to the cell inner membrane. Required for the insertion and/or proper folding and/or complex formation of integral membrane proteins into the membrane. Involved in integration of membrane proteins that insert both dependently and independently of the Sec translocase complex, as well as at least some lipoproteins. Aids folding of multispanning membrane proteins. The chain is Membrane protein insertase YidC from Rickettsia massiliae (strain Mtu5).